We begin with the raw amino-acid sequence, 265 residues long: tRNA pseudouridine synthase A (265 aa).

The active-site Nucleophile is the D53. Residue Y111 coordinates substrate.

The protein belongs to the tRNA pseudouridine synthase TruA family. As to quaternary structure, homodimer.

It catalyses the reaction uridine(38/39/40) in tRNA = pseudouridine(38/39/40) in tRNA. In terms of biological role, formation of pseudouridine at positions 38, 39 and 40 in the anticodon stem and loop of transfer RNAs. This Acinetobacter baumannii (strain ACICU) protein is tRNA pseudouridine synthase A.